Reading from the N-terminus, the 81-residue chain is uncharacterized protein (81 aa).

K5 participates in a covalent cross-link: Glycyl lysine isopeptide (Lys-Gly) (interchain with G-Cter in host protein DncV).

In terms of processing, cross-linked via an isopeptide bond to E.coli host protein DncV during infection.

This is an uncharacterized protein from Enterobacteria phage T4 (Bacteriophage T4).